A 237-amino-acid chain; its full sequence is MAKYTDITNSAIATIVAEIITLPICTFKTNYQNNSTLSMQQCLKNIYMKNGISGFYKASVPAIMSQTYSTSSKYFLFRFFENKNYPYTNKMINGIISGIMTSLITHPIDNIKIHLQMNDSFMCKLRENGFGLFYRGYSKSFGKTVISSSMFFPLYETLNEYFEKPVVSSMLTAIISTTIMQPLDFLKTRHIYGLSLYNGLNLQHYYRGLSLNLMRIVPHFVITMTTIDFLNKKTLQY.

3 Solcar repeats span residues M1–K83, Y85–Y161, and K164–K233. The next 5 membrane-spanning stretches (helical) occupy residues A11 to F27, V60 to L76, M91 to I108, S140 to E160, and V166 to L183. The Substrate recognition signature appears at I191–L196. The helical transmembrane segment at Y205–T226 threads the bilayer.

This sequence belongs to the mitochondrial carrier (TC 2.A.29) family.

Its subcellular location is the host mitochondrion inner membrane. Its function is as follows. Transports dATP and to a lesser extent dTTP, TTP, UTP and ADP, possibly across the mitochondrial inner membrane. The sequence is that of Mitochondrial carrier-like protein L276 from Acanthamoeba polyphaga (Amoeba).